A 112-amino-acid polypeptide reads, in one-letter code: CLAVATA3/ESR (CLE)-related protein 44 (112 aa).

A signal peptide spans 1-39; the sequence is MATTIDQTSIKSLHFHQVIRLIITIIFLAFLFLIGPTSS. The segment at 41-112 is disordered; sequence NHHLHESSSK…VPSGPNPISN (72 aa). Residues 62–71 show a composition bias toward polar residues; that stretch reads QPSTPSSSTM. Residues P104 and P107 each carry the hydroxyproline modification. O-linked (Ara...) hydroxyproline glycosylation occurs at P107.

It belongs to the CLV3/ESR signal peptide family. Interacts specifically with the leucine-rich repeat receptor-like protein kinase TDR, especially in the presence of SERK2. Post-translationally, the O-glycosylation (arabinosylation) of the hydroxyproline Pro-107 enhances binding affinity of the CLE44p peptide for its receptor. Mostly expressed in flowers and leaves. Widely expressed along the vascular strands. In roots and hypocotyls, present in endodermal cells as well as cells in the phloem and the adjacent pericycle.

Its subcellular location is the secreted. It is found in the extracellular space. Extracellular signal peptide that regulates cell fate. May act with TDR as a ligand-receptor pair in a signal transduction pathway that represses tracheary element differentiation but promotes the formation of procambial cells adjacent to phloem cells in the veins. Regulates the transition of protophloem cells from proliferation to differentiation, thus impinging on postembryonic growth capacity of the root meristem; this signaling pathway requires CRN and CLV2. The sequence is that of CLAVATA3/ESR (CLE)-related protein 44 from Arabidopsis thaliana (Mouse-ear cress).